The sequence spans 144 residues: Putative pre-16S rRNA nuclease (144 aa).

The protein belongs to the YqgF nuclease family.

The protein localises to the cytoplasm. Functionally, could be a nuclease involved in processing of the 5'-end of pre-16S rRNA. The chain is Putative pre-16S rRNA nuclease from Mycoplasma mobile (strain ATCC 43663 / 163K / NCTC 11711) (Mesomycoplasma mobile).